An 824-amino-acid polypeptide reads, in one-letter code: E3 ubiquitin-protein ligase TRIM71 (824 aa).

Residues 23 to 93 (CPLCKELCGC…PLKLRCPTCD (71 aa)) form an RING-type zinc finger. The disordered stretch occupies residues 37–56 (SSNSSTSSSSSQTSNSSSTS). A B box-type 1; atypical zinc finger spans residues 147-194 (LSDPQCSSCDEGNPATSHCLDCQEYLCDNCVRAHQRVRLTKDHFIEGL). Cys152, Cys155, Cys176, His180, Cys234, His237, Cys257, and His262 together coordinate Zn(2+). The segment at 229-270 (ERMDFCQHHDDAVLRFFCDSCTVPICRECSLGRHAGHSFTYL) adopts a B box-type 2 zinc-finger fold. Residues 293–321 (QAIQLSIEKAQAIAEQVELKAKVVQSEVK) adopt a coiled-coil conformation. The Filamin repeat unit spans residues 435 to 536 (SSGAFATASK…IEGSPFKVMV (102 aa)). 6 NHL repeats span residues 549-592 (MASF…FKPC), 596-639 (HHKF…FTFD), 643-686 (LLKF…FGPD), 690-733 (LNKY…IRPD), 737-780 (ARFL…FEPN), and 784-824 (LCKF…ILMF).

This sequence belongs to the TRIM/RBCC family.

Its subcellular location is the cytoplasm. It localises to the P-body. The catalysed reaction is S-ubiquitinyl-[E2 ubiquitin-conjugating enzyme]-L-cysteine + [acceptor protein]-L-lysine = [E2 ubiquitin-conjugating enzyme]-L-cysteine + N(6)-ubiquitinyl-[acceptor protein]-L-lysine.. It participates in protein modification; protein ubiquitination. Its function is as follows. E3 ubiquitin-protein ligase that cooperates with the microRNAs (miRNAs) machinery and promotes embryonic stem cells proliferation and maintenance. Binds to miRNAs and participates in post-transcriptional repression of transcripts. Required to maintain proliferation and prevent premature differentiation of neural progenitor cells during early neural development. The protein is E3 ubiquitin-protein ligase TRIM71 (trim71) of Danio rerio (Zebrafish).